The sequence spans 321 residues: Nitrilase blr3397 (321 aa).

A CN hydrolase domain is found at 10 to 277 (YKAAVVQAAS…ETILYADIAL (268 aa)). The active-site Proton acceptor is the glutamate 50. Lysine 137 (proton donor) is an active-site residue. The active-site Nucleophile is cysteine 171.

It belongs to the carbon-nitrogen hydrolase superfamily. Nitrilase family. In terms of assembly, homodecamer.

The catalysed reaction is an aliphatic nitrile + 2 H2O = a carboxylate + NH4(+). In terms of biological role, nitrilase that acts on various kinds of nitrile compounds such as aliphatic and aromatic nitriles. Has higher activity toward aliphatic nitriles compared to aromatic nitriles. Among the different substrates tested, has the highest activity toward hydrocinnamonitrile. This is Nitrilase blr3397 from Bradyrhizobium diazoefficiens (strain JCM 10833 / BCRC 13528 / IAM 13628 / NBRC 14792 / USDA 110).